We begin with the raw amino-acid sequence, 155 residues long: Ribonuclease H (155 aa).

The 146-residue stretch at 1–146 (MNALFAWTDG…ADELARAGMA (146 aa)) folds into the RNase H type-1 domain. Mg(2+) contacts are provided by Asp9, Glu52, Asp74, and Asp138.

It belongs to the RNase H family. In terms of assembly, monomer. Mg(2+) is required as a cofactor.

The protein localises to the cytoplasm. It catalyses the reaction Endonucleolytic cleavage to 5'-phosphomonoester.. Its function is as follows. Endonuclease that specifically degrades the RNA of RNA-DNA hybrids. This is Ribonuclease H from Paracoccus denitrificans (strain Pd 1222).